The chain runs to 228 residues: MNARVALQLSGIERHYGEGDTFLPILKGADLTLRSGETVALVAPSGTGKSTLLHIAGLLEHPDEGEVLVNGTSCNGLSDDRRTAIRRNEIGFVYQFHHLLPEFSALENIMMPQLIAGLPKAEAAERASALLDYMRIGHRGSHRPTELSGGEQQRVAIARAVANAPLILLADEPTGNLDPETAGYVFEALEALARQSGLAALIATHNHELASLMDRRVTIEDGKVVELK.

An ABC transporter domain is found at 7–227 (LQLSGIERHY…TIEDGKVVEL (221 aa)). 43-50 (APSGTGKS) serves as a coordination point for ATP.

Belongs to the ABC transporter superfamily. Lipoprotein translocase (TC 3.A.1.125) family. As to quaternary structure, the complex is composed of two ATP-binding proteins (LolD) and two transmembrane proteins (LolC and LolE).

Its subcellular location is the cell inner membrane. Part of the ABC transporter complex LolCDE involved in the translocation of mature outer membrane-directed lipoproteins, from the inner membrane to the periplasmic chaperone, LolA. Responsible for the formation of the LolA-lipoprotein complex in an ATP-dependent manner. The chain is Lipoprotein-releasing system ATP-binding protein LolD from Rhizobium meliloti (strain 1021) (Ensifer meliloti).